The primary structure comprises 439 residues: Ornithine aminotransferase, mitochondrial (439 aa).

The N-terminal 25 residues, 1–25, are a transit peptide targeting the mitochondrion; in hepatic form; the sequence is MFSKLAHLQRFAVLSRGVHSSVASA. The N-terminal 35 residues, 1–35, are a transit peptide targeting the mitochondrion; in renal form; sequence MFSKLAHLQRFAVLSRGVHSSVASATSVATKKTVQ. N6-acetyllysine is present on residues K49 and K66. K102 carries the post-translational modification N6-succinyllysine. N6-acetyllysine; alternate is present on K107. The residue at position 107 (K107) is an N6-succinyllysine; alternate. K292 is subject to N6-(pyridoxal phosphate)lysine. An N6-acetyllysine; alternate modification is found at K362. An N6-succinyllysine; alternate modification is found at K362. K386 and K392 each carry N6-acetyllysine. An N6-acetyllysine; alternate modification is found at K405. N6-succinyllysine; alternate is present on K405. N6-acetyllysine is present on K421.

The protein belongs to the class-III pyridoxal-phosphate-dependent aminotransferase family. Homohexamer. Pyridoxal 5'-phosphate serves as cofactor.

The protein localises to the mitochondrion matrix. The catalysed reaction is L-ornithine + 2-oxoglutarate = L-glutamate 5-semialdehyde + L-glutamate. It functions in the pathway amino-acid biosynthesis; L-proline biosynthesis; L-glutamate 5-semialdehyde from L-ornithine: step 1/1. Its function is as follows. Catalyzes the reversible interconversion of L-ornithine and 2-oxoglutarate to L-glutamate semialdehyde and L-glutamate. This Homo sapiens (Human) protein is Ornithine aminotransferase, mitochondrial (OAT).